The primary structure comprises 456 residues: Phosphomannomutase (456 aa).

Catalysis depends on Ser-98, which acts as the Phosphoserine intermediate. Ser-98, Asp-245, Asp-247, and Asp-249 together coordinate Mg(2+).

The protein belongs to the phosphohexose mutase family. Mg(2+) is required as a cofactor.

The catalysed reaction is alpha-D-mannose 1-phosphate = D-mannose 6-phosphate. It participates in nucleotide-sugar biosynthesis; GDP-alpha-D-mannose biosynthesis; alpha-D-mannose 1-phosphate from D-fructose 6-phosphate: step 2/2. Functionally, involved in the biosynthesis of the capsular polysaccharide colanic acid. The protein is Phosphomannomutase (manB) of Escherichia coli (strain K12).